The primary structure comprises 330 residues: Aspartate--ammonia ligase (330 aa).

The protein belongs to the class-II aminoacyl-tRNA synthetase family. AsnA subfamily.

The protein resides in the cytoplasm. The enzyme catalyses L-aspartate + NH4(+) + ATP = L-asparagine + AMP + diphosphate + H(+). It functions in the pathway amino-acid biosynthesis; L-asparagine biosynthesis; L-asparagine from L-aspartate (ammonia route): step 1/1. In Yersinia enterocolitica serotype O:8 / biotype 1B (strain NCTC 13174 / 8081), this protein is Aspartate--ammonia ligase.